The primary structure comprises 543 residues: MRVLPATLLVGAATAAAPPFQQILGLPKKGADTLAKPLHDLQEQLKTLSGEARHLWDEVANHFPNNMDHNPVFSLPKKHTRRPDSHWDHIVRGADVQSVWVTGASGEKEREIDGKLEAYDLRVKKTDPSALGIDPGVKQYTGYLDDNENDKHLFYWFFESRNDPKNDPVVLWLNGGPGCSSLTGLFLELGPSSINEKIKPIYNDFAWNSNASVIFLDQPVNVGYSYSGAAVSDTVAAGKDVYALLTLFFKQFPEYAKQDFHIAGESYAGHYIPVFASEILSHKKRNINLKSVLIGNGLTDGLTQYDYYRPMACGEGGYPAVLDEASCQSMDNALPRCKSMIESCYNTESSWICVPASIYCNNALLGPYQRTGQNVYDIRGKCEDTSNLCYKGMGYVSEYLNKREVREAVGAEVDGYESCNFDINRNFLFHGDWMKPYHRLVPGLLEQIPVLIYAGDADFICNWLGNKAWTEALEWPGQKEYAPLPLKDLVIEENEHKGKKIGQIKSHGNFTFMRLYGAGHMVPMDQPEASLEFFNRWLGGEWF.

Residues 1–17 (MRVLPATLLVGAATAAA) form the signal peptide. Residues 18 to 124 (PPFQQILGLP…KLEAYDLRVK (107 aa)) constitute a propeptide that is removed on maturation. 5 disulfides stabilise this stretch: cysteine 179–cysteine 419, cysteine 313–cysteine 327, cysteine 337–cysteine 360, cysteine 344–cysteine 353, and cysteine 382–cysteine 389. Asparagine 210 carries N-linked (GlcNAc...) asparagine glycosylation. Residue serine 266 is part of the active site. Residue aspartate 458 is part of the active site. Asparagine 509 carries an N-linked (GlcNAc...) asparagine glycan. The active site involves histidine 520.

The protein belongs to the peptidase S10 family.

Its subcellular location is the vacuole. The catalysed reaction is Release of a C-terminal amino acid with broad specificity.. Functionally, vacuolar carboxypeptidase involved in degradation of small peptides. Digests preferentially peptides containing an aliphatic or hydrophobic residue in P1' position, as well as methionine, leucine or phenylalanine in P1 position of ester substrate. The chain is Carboxypeptidase Y homolog A (cpyA) from Neosartorya fischeri (strain ATCC 1020 / DSM 3700 / CBS 544.65 / FGSC A1164 / JCM 1740 / NRRL 181 / WB 181) (Aspergillus fischerianus).